The primary structure comprises 424 residues: Adenylosuccinate synthetase (424 aa).

GTP-binding positions include 12–18 and 40–42; these read GDEGKGK and GHT. Asp-13 (proton acceptor) is an active-site residue. Asp-13 and Gly-40 together coordinate Mg(2+). IMP is bound by residues 13–16, 38–41, Thr-130, Arg-144, Asn-220, Thr-235, and Arg-299; these read DEGK and NAGH. His-41 (proton donor) is an active-site residue. 295–301 is a binding site for substrate; the sequence is VTTGRKR. Residues Arg-301, 327 to 329, and 412 to 414 each bind GTP; these read KLD and GTG.

It belongs to the adenylosuccinate synthetase family. Homodimer. The cofactor is Mg(2+).

Its subcellular location is the cytoplasm. It catalyses the reaction IMP + L-aspartate + GTP = N(6)-(1,2-dicarboxyethyl)-AMP + GDP + phosphate + 2 H(+). It participates in purine metabolism; AMP biosynthesis via de novo pathway; AMP from IMP: step 1/2. In terms of biological role, plays an important role in the de novo pathway and in the salvage pathway of purine nucleotide biosynthesis. Catalyzes the first committed step in the biosynthesis of AMP from IMP. This Emericella nidulans (strain FGSC A4 / ATCC 38163 / CBS 112.46 / NRRL 194 / M139) (Aspergillus nidulans) protein is Adenylosuccinate synthetase (adB).